The chain runs to 1363 residues: DNA-directed RNA polymerase subunit beta' (1363 aa).

A disordered region spans residues 1–39; the sequence is MTSTPSKSRKSSKGSKAAKAAASAPETRPLAKTPPPFRN. The segment covering 14-24 has biased composition (low complexity); sequence GSKAAKAAASA. Cysteine 248, cysteine 315, cysteine 322, and cysteine 325 together coordinate Zn(2+).

Belongs to the RNA polymerase beta' chain family. RpoC2 subfamily. In terms of assembly, in cyanobacteria the RNAP catalytic core is composed of 2 alpha, 1 beta, 1 beta', 1 gamma and 1 omega subunit. When a sigma factor is associated with the core the holoenzyme is formed, which can initiate transcription. Requires Zn(2+) as cofactor.

It carries out the reaction RNA(n) + a ribonucleoside 5'-triphosphate = RNA(n+1) + diphosphate. In terms of biological role, DNA-dependent RNA polymerase catalyzes the transcription of DNA into RNA using the four ribonucleoside triphosphates as substrates. The chain is DNA-directed RNA polymerase subunit beta' from Synechococcus sp. (strain WH7803).